A 430-amino-acid polypeptide reads, in one-letter code: Gamma-glutamyl phosphate reductase (430 aa).

The protein belongs to the gamma-glutamyl phosphate reductase family.

The protein localises to the cytoplasm. It carries out the reaction L-glutamate 5-semialdehyde + phosphate + NADP(+) = L-glutamyl 5-phosphate + NADPH + H(+). The protein operates within amino-acid biosynthesis; L-proline biosynthesis; L-glutamate 5-semialdehyde from L-glutamate: step 2/2. In terms of biological role, catalyzes the NADPH-dependent reduction of L-glutamate 5-phosphate into L-glutamate 5-semialdehyde and phosphate. The product spontaneously undergoes cyclization to form 1-pyrroline-5-carboxylate. The sequence is that of Gamma-glutamyl phosphate reductase from Corynebacterium diphtheriae (strain ATCC 700971 / NCTC 13129 / Biotype gravis).